We begin with the raw amino-acid sequence, 466 residues long: Ornithine decarboxylase (466 aa).

Lys116 carries the post-translational modification N6-(pyridoxal phosphate)lysine. Residues Ser247, Gly286, and 318–321 each bind pyridoxal 5'-phosphate; that span reads EPGR. 362–363 contacts substrate; the sequence is FD. Residue Cys411 is the Proton donor; shared with dimeric partner of the active site. Asp412 contributes to the substrate binding site. Tyr441 contacts pyridoxal 5'-phosphate.

It belongs to the Orn/Lys/Arg decarboxylase class-II family. In terms of assembly, homodimer. Only the dimer is catalytically active, as the active sites are constructed of residues from both monomers. The cofactor is pyridoxal 5'-phosphate.

It localises to the cytoplasm. It carries out the reaction L-ornithine + H(+) = putrescine + CO2. It participates in amine and polyamine biosynthesis; putrescine biosynthesis via L-ornithine pathway; putrescine from L-ornithine: step 1/1. Its activity is regulated as follows. Inhibited by antizyme (AZ) OAZ1 in response to polyamine levels. AZ inhibits the assembly of the functional homodimer by binding to ODC monomers and targeting them for ubiquitin-independent proteolytic destruction by the 26S proteasome. Functionally, catalyzes the first and rate-limiting step of polyamine biosynthesis that converts ornithine into putrescine, which is the precursor for the polyamines, spermidine and spermine. Polyamines are essential for cell proliferation and are implicated in cellular processes, ranging from DNA replication to apoptosis. The protein is Ornithine decarboxylase of Saccharomyces cerevisiae (strain ATCC 204508 / S288c) (Baker's yeast).